The chain runs to 465 residues: Na(+)-translocating NADH-quinone reductase subunit A (465 aa).

It belongs to the NqrA family. As to quaternary structure, composed of six subunits; NqrA, NqrB, NqrC, NqrD, NqrE and NqrF.

It carries out the reaction a ubiquinone + n Na(+)(in) + NADH + H(+) = a ubiquinol + n Na(+)(out) + NAD(+). NQR complex catalyzes the reduction of ubiquinone-1 to ubiquinol by two successive reactions, coupled with the transport of Na(+) ions from the cytoplasm to the periplasm. NqrA to NqrE are probably involved in the second step, the conversion of ubisemiquinone to ubiquinol. The chain is Na(+)-translocating NADH-quinone reductase subunit A from Chlamydia trachomatis serovar A (strain ATCC VR-571B / DSM 19440 / HAR-13).